An 84-amino-acid polypeptide reads, in one-letter code: Beta/gamma-crystallin (84 aa).

Beta/gamma crystallin 'Greek key' domains follow at residues 2–42 and 43–84; these read GKII…IVES and GTWF…VKQQ. The segment at 64–84 is disordered; the sequence is KYPNPGSWGGNDDELSSVKQQ.

Belongs to the beta/gamma-crystallin family. Monomer. As to expression, palps of larvae and otolith of the light-sensing ocellus.

Structural component of the neuroectodermal visual system. The polypeptide is Beta/gamma-crystallin (Ciona intestinalis (Transparent sea squirt)).